The following is a 131-amino-acid chain: Cruxhalorhodopsin-1 (131 aa).

A helical transmembrane segment spans residues 1–11 (PMILLALGLLA). Over 12–14 (DTD) the chain is Cytoplasmic. A helical transmembrane segment spans residues 15–38 (IASLFTAITMDIGMCVTGLAAALI). Residues 39 to 41 (TSS) lie on the Extracellular side of the membrane. A helical transmembrane segment spans residues 42–64 (HLLRWVFYGISCAFFVAVLYVLL). The Cytoplasmic segment spans residues 65 to 76 (VQWPADAEAAGT). The chain crosses the membrane as a helical span at residues 77–100 (SEIFGTLKILTVVLWLGYPILWAL). Residues 101-109 (GSEGVALLS) are Extracellular-facing. The helical transmembrane segment at 110–131 (VGVTSWGYSGLDILAKYVFAFI) threads the bilayer. The residue at position 125 (lysine 125) is an N6-(retinylidene)lysine.

The protein belongs to the archaeal/bacterial/fungal opsin family.

The protein localises to the cell membrane. Functionally, light-driven chloride pump. This Haloarcula argentinensis protein is Cruxhalorhodopsin-1 (choP1).